A 25-amino-acid chain; its full sequence is Small ribosomal subunit protein eS32 (25 aa).

A disordered region spans residues 1-25 (MRAKWRKKRMRRLKRKRRKMRARSK).

The protein belongs to the eukaryotic ribosomal protein eS32 family. In terms of assembly, component of the small ribosomal subunit.

This is Small ribosomal subunit protein eS32 (RpL41) from Spodoptera frugiperda (Fall armyworm).